Reading from the N-terminus, the 335-residue chain is Peroxidase 2 (335 aa).

An N-terminal signal peptide occupies residues 1-29 (MAAATAPKTMPSSVFAAALLLLAAAACQA). Cystine bridges form between Cys44/Cys125, Cys77/Cys82, Cys131/Cys329, and Cys212/Cys238. The active-site Proton acceptor is the His75. Positions 76, 79, 81, 83, and 85 each coordinate Ca(2+). Residues Asn166 and Asn180 are each glycosylated (N-linked (GlcNAc...) asparagine). Residue His205 coordinates heme b. Thr206 is a binding site for Ca(2+). Asn241 carries an N-linked (GlcNAc...) asparagine glycan. 3 residues coordinate Ca(2+): Asp253, Thr256, and Asp261.

It belongs to the peroxidase family. Classical plant (class III) peroxidase subfamily. Requires heme b as cofactor. It depends on Ca(2+) as a cofactor. Expressed in the elongating region of young roots, and in root vascular tissues and epidermis.

Its subcellular location is the secreted. It carries out the reaction 2 a phenolic donor + H2O2 = 2 a phenolic radical donor + 2 H2O. In terms of biological role, removal of H(2)O(2), oxidation of toxic reductants, biosynthesis and degradation of lignin, suberization, auxin catabolism, response to environmental stresses such as wounding, pathogen attack and oxidative stress. These functions might be dependent on each isozyme/isoform in each plant tissue. This chain is Peroxidase 2 (PER2), found in Zea mays (Maize).